The following is a 632-amino-acid chain: Mitoguardin 1 (632 aa).

Residues 70-90 (PVAKKLFVVTAVSAISVIFLA) traverse the membrane as a helical segment. Phosphoserine occurs at positions 289 and 293.

It belongs to the mitoguardin family. Homodimer and heterodimer; forms heterodimers with MIGA2. Interacts with PLD6/MitoPLD.

The protein localises to the mitochondrion outer membrane. Regulator of mitochondrial fusion: acts by forming homo- and heterodimers at the mitochondrial outer membrane and facilitating the formation of PLD6/MitoPLD dimers. May act by regulating phospholipid metabolism via PLD6/MitoPLD. The chain is Mitoguardin 1 from Homo sapiens (Human).